The following is a 156-amino-acid chain: Small ribosomal subunit protein uS7A/uS7B (156 aa).

This sequence belongs to the universal ribosomal protein uS7 family. Part of the 30S ribosomal subunit. Contacts proteins S9 and S11.

Functionally, one of the primary rRNA binding proteins, it binds directly to 16S rRNA where it nucleates assembly of the head domain of the 30S subunit. Is located at the subunit interface close to the decoding center, probably blocks exit of the E-site tRNA. The protein is Small ribosomal subunit protein uS7A/uS7B of Cereibacter sphaeroides (strain ATCC 17029 / ATH 2.4.9) (Rhodobacter sphaeroides).